The sequence spans 94 residues: C-C motif chemokine 17 (94 aa).

The first 23 residues, 1–23, serve as a signal peptide directing secretion; it reads MAPLKMLALVTLLLGASLQHIHA. 2 cysteine pairs are disulfide-bonded: Cys33–Cys57 and Cys34–Cys73.

It belongs to the intercrine beta (chemokine CC) family. In terms of tissue distribution, constitutively expressed in thymus. Detected at lower levels in the lung, colon and small intestine. Expressed in stimulated peripheral blood mononuclear cells, but not in resting cells.

It is found in the secreted. Its function is as follows. Chemokine, which displays chemotactic activity for T lymphocytes, preferentially Th2 cells, but not monocytes or granulocytes. Therefore plays an important role in a wide range of inflammatory and immunological processes. Acts by binding to CCR4 at T-cell surface. Mediates GM-CSF/CSF2-driven pain and inflammation. In the brain, required to maintain the typical, highly branched morphology of hippocampal microglia under homeostatic conditions. May be important for the appropriate adaptation of microglial morphology and synaptic plasticity to acute lipopolysaccharide (LPS)-induced neuroinflammation. Plays a role in wound healing, mainly by inducing fibroblast migration into the wound. The polypeptide is C-C motif chemokine 17 (CCL17) (Homo sapiens (Human)).